The following is a 465-amino-acid chain: Ribulose bisphosphate carboxylase large chain (465 aa).

Residue lysine 4 is modified to N6,N6,N6-trimethyllysine. Substrate contacts are provided by asparagine 113 and threonine 163. Catalysis depends on lysine 165, which acts as the Proton acceptor. Lysine 167 lines the substrate pocket. Residues lysine 191, aspartate 193, and glutamate 194 each coordinate Mg(2+). Lysine 191 is subject to N6-carboxylysine. The active-site Proton acceptor is the histidine 284. Substrate-binding residues include arginine 285, histidine 317, and serine 369.

Belongs to the RuBisCO large chain family. Type I subfamily. Heterohexadecamer of 8 large chains and 8 small chains; disulfide-linked. The disulfide link is formed within the large subunit homodimers. Mg(2+) is required as a cofactor. Post-translationally, the disulfide bond which can form in the large chain dimeric partners within the hexadecamer appears to be associated with oxidative stress and protein turnover.

It is found in the plastid. It localises to the chloroplast. The catalysed reaction is 2 (2R)-3-phosphoglycerate + 2 H(+) = D-ribulose 1,5-bisphosphate + CO2 + H2O. It catalyses the reaction D-ribulose 1,5-bisphosphate + O2 = 2-phosphoglycolate + (2R)-3-phosphoglycerate + 2 H(+). In terms of biological role, ruBisCO catalyzes two reactions: the carboxylation of D-ribulose 1,5-bisphosphate, the primary event in carbon dioxide fixation, as well as the oxidative fragmentation of the pentose substrate in the photorespiration process. Both reactions occur simultaneously and in competition at the same active site. The polypeptide is Ribulose bisphosphate carboxylase large chain (Epacris sp).